The primary structure comprises 151 residues: Large ribosomal subunit protein bL9 (151 aa).

The protein belongs to the bacterial ribosomal protein bL9 family.

Binds to the 23S rRNA. The protein is Large ribosomal subunit protein bL9 of Mycolicibacterium gilvum (strain PYR-GCK) (Mycobacterium gilvum (strain PYR-GCK)).